The following is a 369-amino-acid chain: UDP-N-acetylglucosamine--N-acetylmuramyl-(pentapeptide) pyrophosphoryl-undecaprenol N-acetylglucosamine transferase (369 aa).

Residues 10-12, N124, R166, S196, and Q300 contribute to the UDP-N-acetyl-alpha-D-glucosamine site; that span reads TGG.

Belongs to the glycosyltransferase 28 family. MurG subfamily.

The protein resides in the cell membrane. It carries out the reaction di-trans,octa-cis-undecaprenyl diphospho-N-acetyl-alpha-D-muramoyl-L-alanyl-D-glutamyl-meso-2,6-diaminopimeloyl-D-alanyl-D-alanine + UDP-N-acetyl-alpha-D-glucosamine = di-trans,octa-cis-undecaprenyl diphospho-[N-acetyl-alpha-D-glucosaminyl-(1-&gt;4)]-N-acetyl-alpha-D-muramoyl-L-alanyl-D-glutamyl-meso-2,6-diaminopimeloyl-D-alanyl-D-alanine + UDP + H(+). It participates in cell wall biogenesis; peptidoglycan biosynthesis. Cell wall formation. Catalyzes the transfer of a GlcNAc subunit on undecaprenyl-pyrophosphoryl-MurNAc-pentapeptide (lipid intermediate I) to form undecaprenyl-pyrophosphoryl-MurNAc-(pentapeptide)GlcNAc (lipid intermediate II). The sequence is that of UDP-N-acetylglucosamine--N-acetylmuramyl-(pentapeptide) pyrophosphoryl-undecaprenol N-acetylglucosamine transferase from Desulfitobacterium hafniense (strain Y51).